A 393-amino-acid chain; its full sequence is Elongation factor Tu (393 aa).

The tr-type G domain occupies 10 to 203 (KPHVNIGTIG…AVDNYIPEPV (194 aa)). The G1 stretch occupies residues 19 to 26 (GHVDHGKT). Residue 19 to 26 (GHVDHGKT) coordinates GTP. T26 contacts Mg(2+). The G2 stretch occupies residues 60–64 (GITIS). Residues 81–84 (DCPG) form a G3 region. GTP is bound by residues 81–85 (DCPGH) and 136–139 (NKVD). The segment at 136-139 (NKVD) is G4. Residues 173–175 (SAL) are G5.

It belongs to the TRAFAC class translation factor GTPase superfamily. Classic translation factor GTPase family. EF-Tu/EF-1A subfamily. In terms of assembly, monomer.

The protein resides in the cytoplasm. It catalyses the reaction GTP + H2O = GDP + phosphate + H(+). Its function is as follows. GTP hydrolase that promotes the GTP-dependent binding of aminoacyl-tRNA to the A-site of ribosomes during protein biosynthesis. The protein is Elongation factor Tu of Chlorobium phaeovibrioides (strain DSM 265 / 1930) (Prosthecochloris vibrioformis (strain DSM 265)).